Here is a 187-residue protein sequence, read N- to C-terminus: Ubiquinol-cytochrome c reductase iron-sulfur subunit (187 aa).

The helical transmembrane segment at 15-35 threads the bilayer; it reads LYYATAGAGAVATGAAVWPLI. Residues 89-185 form the Rieske domain; sequence QLGQLVDTNA…AKFIDETTIQ (97 aa). [2Fe-2S] cluster-binding residues include Cys-129, His-131, Cys-149, and His-152. Cys-134 and Cys-151 are disulfide-bonded.

This sequence belongs to the Rieske iron-sulfur protein family. The main subunits of complex b-c1 are: cytochrome b, cytochrome c1 and the Rieske protein. The cofactor is [2Fe-2S] cluster.

It localises to the cell membrane. It catalyses the reaction a quinol + 2 Fe(III)-[cytochrome c](out) = a quinone + 2 Fe(II)-[cytochrome c](out) + 2 H(+)(out). Component of the ubiquinol-cytochrome c reductase complex (complex III or cytochrome b-c1 complex), which is a respiratory chain that generates an electrochemical potential coupled to ATP synthesis. The polypeptide is Ubiquinol-cytochrome c reductase iron-sulfur subunit (petA) (Cereibacter sphaeroides (Rhodobacter sphaeroides)).